The sequence spans 165 residues: Type 3 secretion system regulator YopR (165 aa).

Belongs to the YopR family.

It is found in the secreted. In terms of biological role, may be involved in the regulation of the assembly of the type III secretion system (T3SS), also called injectisome, which is used to inject bacterial effector proteins into eukaryotic host cells. May control the secretion and/or polymerization of YscF/SctF, the principal component of the needle filament, thereby impacting the assembly of the T3SS. Involved in pathogenesis. This is Type 3 secretion system regulator YopR from Yersinia pseudotuberculosis serotype I (strain IP32953).